Reading from the N-terminus, the 162-residue chain is Large ribosomal subunit protein uL10 (162 aa).

It belongs to the universal ribosomal protein uL10 family. As to quaternary structure, part of the ribosomal stalk of the 50S ribosomal subunit. The N-terminus interacts with L11 and the large rRNA to form the base of the stalk. The C-terminus forms an elongated spine to which L12 dimers bind in a sequential fashion forming a multimeric L10(L12)X complex.

Forms part of the ribosomal stalk, playing a central role in the interaction of the ribosome with GTP-bound translation factors. This chain is Large ribosomal subunit protein uL10, found in Phytoplasma mali (strain AT).